We begin with the raw amino-acid sequence, 325 residues long: uncharacterized protein (325 aa).

A disordered region spans residues 108-141 (PHRTQGISSTSSKSSKGGKKTPVRSTPKEIKKAT).

This is an uncharacterized protein from Homo sapiens (Human).